Here is a 267-residue protein sequence, read N- to C-terminus: Integral membrane protein 2C (267 aa).

T37 carries the phosphothreonine modification. Residues 55–75 (VGGVCYLSMGMVVLLMGLVFA) traverse the membrane as a helical; Signal-anchor for type II membrane protein segment. Residues 136-230 (FGGGDPADII…LCNGKDTYRL (95 aa)) form the BRICHOS domain. C163 and C222 are joined by a disulfide. N-linked (GlcNAc...) asparagine glycosylation is present at N169.

It belongs to the ITM2 family. Interacts with BACE1. Interacts with APP. Interacts with STMN2. Post-translationally, type I membrane-bound, as well as soluble, furin has a pre-eminent role in ITM2C proteolytic processing. PCSK7 and PCSK5 may also be involved although to a lesser extent. The soluble form of PCSK7 is incapable of processing ITM2C. Fails to undergo shedding by ADAM10 and intramembrane cleavage by SPPL2B.

It is found in the lysosome membrane. The protein resides in the cell membrane. Its function is as follows. Negative regulator of amyloid-beta peptide production. May inhibit the processing of APP by blocking its access to alpha- and beta-secretase. Binding to the beta-secretase-cleaved APP C-terminal fragment is negligible, suggesting that ITM2C is a poor gamma-secretase cleavage inhibitor. May play a role in TNF-induced cell death and neuronal differentiation. The protein is Integral membrane protein 2C (ITM2C) of Macaca fascicularis (Crab-eating macaque).